Here is a 256-residue protein sequence, read N- to C-terminus: 14-3-3-like protein GF14-C (256 aa).

Belongs to the 14-3-3 family. In terms of assembly, may form a complex with the transcriptional activator VP1 and the bZIP transcription factor EMBP1. As to expression, expressed in seedlings, internodes and panicles.

It is found in the cytoplasm. The protein resides in the nucleus. Is associated with a DNA binding complex that binds to the G box, a well-characterized cis-acting DNA regulatory element found in plant genes. The chain is 14-3-3-like protein GF14-C (GF14C) from Oryza sativa subsp. japonica (Rice).